We begin with the raw amino-acid sequence, 1273 residues long: MFNRKTLLCTILLVLQAVIRSFCEDASNLAPVIIEHPIDVVVSRGSPATLNCGAKPSTAKITWYKDGQPVITNKEQVNSHRIVLDTGSLFLLKVNSGKNGKDSDAGAYYCVASNEHGEVKSNEGSLKLAMLREDFRVRPRTVQALGGEMAVLECSPPRGFPEPVVSWRKDDKELRIQDMPRYTLHSDGNLIIDPVDRSDSGTYQCVANNMVGERVSNPARLSVFEKPKFEQEPKDMTVDVGAAVLFDCRVTGDPQPQITWKRKNEPMPVTRAYIAKDNRGLRIERVQPSDEGEYVCYARNPAGTLEASAHLRVQAPPSFQTKPADQSVPAGGTATFECTLVGQPSPAYFWSKEGQQDLLFPSYVSADGRTKVSPTGTLTIEEVRQVDEGAYVCAGMNSAGSSLSKAALKVTTKAVTGNTPAKPPPTIEHGHQNQTLMVGSSAILPCQASGKPTPGISWLRDGLPIDITDSRISQHSTGSLHIADLKKPDTGVYTCIAKNEDGESTWSASLTVEDHTSNAQFVRMPDPSNFPSSPTQPIIVNVTDTEVELHWNAPSTSGAGPITGYIIQYYSPDLGQTWFNIPDYVASTEYRIKGLKPSHSYMFVIRAENEKGIGTPSVSSALVTTSKPAAQVALSDKNKMDMAIAEKRLTSEQLIKLEEVKTINSTAVRLFWKKRKLEELIDGYYIKWRGPPRTNDNQYVNVTSPSTENYVVSNLMPFTNYEFFVIPYHSGVHSIHGAPSNSMDVLTAEAPPSLPPEDVRIRMLNLTTLRISWKAPKADGINGILKGFQIVIVGQAPNNNRNITTNERAASVTLFHLVTGMTYKIRVAARSNGGVGVSHGTSEVIMNQDTLEKHLAAQQENESFLYGLINKSHVPVIVIVAILIIFVVIIIAYCYWRNSRNSDGKDRSFIKINDGSVHMASNNLWDVAQNPNQNPMYNTAGRMTMNNRNGQALYSLTPNAQDFFNNCDDYSGTMHRPGSEHHYHYAQLTGGPGNAMSTFYGNQYHDDPSPYATTTLVLSNQQPAWLNDKMLRAPAMPTNPVPPEPPARYADHTAGRRSRSSRASDGRGTLNGGLHHRTSGSQRSDSPPHTDVSYVQLHSSDGTGSSKERTGERRTPPNKTLMDFIPPPPSNPPPPGGHVYDDIFQTATRRQLNRGSTPREDTYDSVSDGAFARVDVNARPTSRNRNLGGRPLKGKRDDDSQRSSLMMDDDGGSSEADGENSEGDVPRGGVRKAVPRMGISASTLAHSCYGTNGTAQRFRSIPRNNGIVTQEQT.

Residues 1 to 23 (MFNRKTLLCTILLVLQAVIRSFC) form the signal peptide. Ig-like C2-type domains follow at residues 31–127 (PVII…GSLK), 133–222 (EDFR…ARLS), 227–312 (PKFE…AHLR), 317–411 (PSFQ…LKVT), and 425–511 (PTIE…ASLT). Intrachain disulfides connect Cys-52-Cys-110, Cys-154-Cys-205, Cys-248-Cys-296, Cys-338-Cys-393, and Cys-446-Cys-495. 3 consecutive Fibronectin type-III domains span residues 533 to 628 (SPTQ…TSKP), 653 to 750 (QLIK…TAEA), and 755 to 849 (PPED…MNQD). A helical membrane pass occupies residues 874–894 (VPVIVIVAILIIFVVIIIAYC). The disordered stretch occupies residues 1033–1273 (APAMPTNPVP…NNGIVTQEQT (241 aa)). The segment covering 1037–1046 (PTNPVPPEPP) has biased composition (pro residues). Over residues 1096–1105 (QLHSSDGTGS) the composition is skewed to polar residues. Basic and acidic residues predominate over residues 1106-1115 (SKERTGERRT). Positions 1125 to 1136 (IPPPPSNPPPPG) are enriched in pro residues. Positions 1145–1156 (QTATRRQLNRGS) are enriched in polar residues. Residues 1207–1222 (MDDDGGSSEADGENSE) are compositionally biased toward acidic residues. The segment covering 1240–1273 (SASTLAHSCYGTNGTAQRFRSIPRNNGIVTQEQT) has biased composition (polar residues).

It belongs to the immunoglobulin superfamily. ROBO/SAX3 family. As to expression, expressed in the AVG interneuron and the male-specific sensory neuron HOA.

The protein localises to the membrane. Functionally, required to confine migrating sex myoblasts to the ventral muscle quadrants during their migration through the body and for multiple aspects of sensory, motor, and interneuron axon guidance. The chain is Protein sax-3 from Caenorhabditis elegans.